We begin with the raw amino-acid sequence, 394 residues long: Elongation factor Tu (394 aa).

Residues 10 to 204 (KPHVNVGTIG…HLDSYIPEPE (195 aa)) enclose the tr-type G domain. The tract at residues 19–26 (GHVDHGKT) is G1. 19–26 (GHVDHGKT) provides a ligand contact to GTP. Thr-26 provides a ligand contact to Mg(2+). Positions 60–64 (GITIN) are G2. The tract at residues 81–84 (DCPG) is G3. GTP contacts are provided by residues 81-85 (DCPGH) and 136-139 (NKCD). A G4 region spans residues 136–139 (NKCD). The segment at 174 to 176 (SAL) is G5.

Belongs to the TRAFAC class translation factor GTPase superfamily. Classic translation factor GTPase family. EF-Tu/EF-1A subfamily. As to quaternary structure, monomer.

The protein localises to the cytoplasm. It carries out the reaction GTP + H2O = GDP + phosphate + H(+). In terms of biological role, GTP hydrolase that promotes the GTP-dependent binding of aminoacyl-tRNA to the A-site of ribosomes during protein biosynthesis. In Cronobacter sakazakii (strain ATCC BAA-894) (Enterobacter sakazakii), this protein is Elongation factor Tu.